Reading from the N-terminus, the 818-residue chain is MCSNGIFVSLLTLSLLLGKSCSETDTLHQGQFLKDGQELVSAFKIFKLKFFNFKNSENLYLGIWFNNLYLNTDSQDRPVWIANRNNPISDRSGSLTVDSLGRLKILRGASTMLELSSIETTRNTTLQLLDSGNLQLQEMDADGSMKRVLWQSFDYPTDTLLPGMKLGFDGKTRKRWELTSWLGDTLPASGSFVFGMDTNITNVLTILWRGNMYWSSGLWNKGRFSEEELNECGFLFSFVSTKSGQYFMYSGDQDDARTFFPTIMIDEQGILRREQMHRQRNRQNYRNRNCLAAGYVVRDEPYGFTSFRVTVSSSASNGFVLSGTFSSVDCSAICLQNSSCLAYASTEPDGTGCEIWNTYPTNKGSASHSPRTIYIRGNENKKVAAWHIVVATLFLMTPIIWFIIYLVLRKFNVKGRNCIRITHKTVLVSMVFLLTMIGFIRRRILSLRFGSTIDQEMLLRELGIDRSCIHKRNERKSNNELQIFSFESVVSATDDFSDENKLGEGGFGPVYKGKLLNGEEVAIKRLSLASGQGLVEFKNEAILIAKLQHTNLVQVLGCCIEKDEKMLIYEYMQNKSLDYFLFDPLRKNVLDWTLRFRIMEGIIQGLLYLHKYSRLKVIHRDIKASNILLDEDMNPKISDFGLARIFGAEETRANTKRVAGTFGYMSPEYFREGLFSAKSDVFSFGVLMLEIICGRKNNSFHHDLEGPLNLIVHVWNLFKENKIREVIDLSLRDSALDYPQVLRCVQVALLCVQENAEDRPSMLDVVSMIYGEGNNALSLPKEPAFYDGPRRSFPEMKVEPQEPENVSASITITVLEAR.

The first 22 residues, 1 to 22 (MCSNGIFVSLLTLSLLLGKSCS), serve as a signal peptide directing secretion. Residues 23–387 (ETDTLHQGQF…NENKKVAAWH (365 aa)) are Extracellular-facing. The region spanning 24–149 (TDTLHQGQFL…DADGSMKRVL (126 aa)) is the Bulb-type lectin domain. Asn123, Asn199, and Asn337 each carry an N-linked (GlcNAc...) asparagine glycan. In terms of domain architecture, PAN spans 290 to 379 (CLAAGYVVRD…PRTIYIRGNE (90 aa)). 2 disulfide bridges follow: Cys330–Cys353 and Cys334–Cys340. The helical transmembrane segment at 388 to 408 (IVVATLFLMTPIIWFIIYLVL) threads the bilayer. Residues 409-818 (RKFNVKGRNC…SITITVLEAR (410 aa)) are Cytoplasmic-facing. One can recognise a Protein kinase domain in the interval 496-785 (FSDENKLGEG…ALSLPKEPAF (290 aa)). ATP is bound by residues 502–510 (LGEGGFGPV) and Lys524. Ser530 is subject to Phosphoserine. The caM-binding stretch occupies residues 585–602 (LRKNVLDWTLRFRIMEGI). Catalysis depends on Asp621, which acts as the Proton acceptor. Phosphoserine occurs at positions 625 and 638. Position 655 is a phosphothreonine (Thr655). A phosphoserine mark is found at Ser699 and Ser807. Thr813 bears the Phosphothreonine mark.

The protein belongs to the protein kinase superfamily. Ser/Thr protein kinase family.

The protein localises to the cell membrane. The enzyme catalyses L-seryl-[protein] + ATP = O-phospho-L-seryl-[protein] + ADP + H(+). It carries out the reaction L-threonyl-[protein] + ATP = O-phospho-L-threonyl-[protein] + ADP + H(+). The polypeptide is G-type lectin S-receptor-like serine/threonine-protein kinase At1g67520 (Arabidopsis thaliana (Mouse-ear cress)).